The primary structure comprises 371 residues: Transmembrane protein 229A (371 aa).

The disordered stretch occupies residues 1-30; sequence MAGSDVASEGPSPRDGATRRPGATGGLRSQ. 6 helical membrane passes run 51–71, 117–137, 235–255, 269–289, 301–321, and 334–354; these read LPAW…DVLV, AFLF…TLAG, FLFF…FFNV, LWSF…YFHL, VPIY…GLRM, and LNFM…LSVY.

This sequence belongs to the TMEM229 family.

The protein resides in the membrane. The chain is Transmembrane protein 229A (Tmem229a) from Mus musculus (Mouse).